Here is a 323-residue protein sequence, read N- to C-terminus: Glyoxylate/hydroxypyruvate reductase HPR3 (323 aa).

NADP(+) contacts are provided by residues 160 to 163 (LGSI), 182 to 184 (SRS), and 238 to 240 (VGR). Catalysis depends on residues R240 and E269. The Proton donor role is filled by H287. NADP(+) is bound at residue 287-289 (HFA).

It belongs to the D-isomer specific 2-hydroxyacid dehydrogenase family. GyaR subfamily. In terms of assembly, homodimer.

It carries out the reaction glycolate + NADP(+) = glyoxylate + NADPH + H(+). It catalyses the reaction (R)-glycerate + NADP(+) = 3-hydroxypyruvate + NADPH + H(+). Inhibited by oxalate. Functionally, catalyzes the NADPH-dependent reduction of glyoxylate and hydroxypyruvate (HP) into glycolate and glycerate. Mostly active in the presence of NADPH and glyoxylate. The polypeptide is Glyoxylate/hydroxypyruvate reductase HPR3 (HPR3) (Arabidopsis thaliana (Mouse-ear cress)).